The following is a 291-amino-acid chain: T-cell leukemia homeobox protein 3 (291 aa).

Residues 1–56 (MEAPASAQTPHPHEPISFGIDQILNSPDQDSAPAPRGPDGASYLGGPPGGRPGATY) are disordered. A DNA-binding region (homeobox) is located at residues 166-225 (RKKPRTSFSRVQICELEKRFHRQKYLASAERAALAKSLKMTDAQVKTWFQNRRTKWRRQT).

The protein localises to the nucleus. This Homo sapiens (Human) protein is T-cell leukemia homeobox protein 3 (TLX3).